The primary structure comprises 198 residues: Recombination protein RecR (198 aa).

Residues 56–71 (CKVCGNFSEEDECVIC) form a C4-type zinc finger. Positions 79–174 (GVICVVEEPK…RVSKLASGLP (96 aa)) constitute a Toprim domain.

This sequence belongs to the RecR family.

Its function is as follows. May play a role in DNA repair. It seems to be involved in an RecBC-independent recombinational process of DNA repair. It may act with RecF and RecO. This chain is Recombination protein RecR, found in Tropheryma whipplei (strain Twist) (Whipple's bacillus).